Reading from the N-terminus, the 61-residue chain is MLNIFSLICICINSALHSSSFFFAKLPEAYAFFNPIVDVMPVIPVLFFLLALVWQAAVSFR.

The propeptide occupies 1-24 (MLNIFSLICICINSALHSSSFFFA). A helical membrane pass occupies residues 40-60 (MPVIPVLFFLLALVWQAAVSF).

It belongs to the PsbK family. PSII is composed of 1 copy each of membrane proteins PsbA, PsbB, PsbC, PsbD, PsbE, PsbF, PsbH, PsbI, PsbJ, PsbK, PsbL, PsbM, PsbT, PsbX, PsbY, PsbZ, Psb30/Ycf12, at least 3 peripheral proteins of the oxygen-evolving complex and a large number of cofactors. It forms dimeric complexes.

Its subcellular location is the plastid. It localises to the chloroplast thylakoid membrane. One of the components of the core complex of photosystem II (PSII). PSII is a light-driven water:plastoquinone oxidoreductase that uses light energy to abstract electrons from H(2)O, generating O(2) and a proton gradient subsequently used for ATP formation. It consists of a core antenna complex that captures photons, and an electron transfer chain that converts photonic excitation into a charge separation. The polypeptide is Photosystem II reaction center protein K (Liriodendron tulipifera (Tuliptree)).